The sequence spans 178 residues: Large ribosomal subunit protein uL6 (178 aa).

Belongs to the universal ribosomal protein uL6 family. As to quaternary structure, part of the 50S ribosomal subunit.

Its function is as follows. This protein binds to the 23S rRNA, and is important in its secondary structure. It is located near the subunit interface in the base of the L7/L12 stalk, and near the tRNA binding site of the peptidyltransferase center. In Halobacterium salinarum (strain ATCC 700922 / JCM 11081 / NRC-1) (Halobacterium halobium), this protein is Large ribosomal subunit protein uL6.